We begin with the raw amino-acid sequence, 276 residues long: CDP-diacylglycerol--serine O-phosphatidyltransferase (276 aa).

The segment at 1-21 (MVESDEDFAPQEFPHTDTDVI) is disordered. Ser4, Ser34, Ser42, Ser46, Ser47, and Ser50 each carry phosphoserine. The next 4 helical transmembrane spans lie at 82–102 (MADY…VSCL), 163–183 (IAFA…FFVL), 210–230 (YFEG…AYCV), and 248–268 (QILE…GMIS).

This sequence belongs to the CDP-alcohol phosphatidyltransferase class-I family. Mn(2+) serves as cofactor. The cofactor is Mg(2+).

It localises to the microsome membrane. The protein localises to the endoplasmic reticulum membrane. Its subcellular location is the mitochondrion outer membrane. It catalyses the reaction a CDP-1,2-diacyl-sn-glycerol + L-serine = a 1,2-diacyl-sn-glycero-3-phospho-L-serine + CMP + H(+). It functions in the pathway phospholipid metabolism; phosphatidylethanolamine biosynthesis; phosphatidylethanolamine from CDP-diacylglycerol: step 1/2. In terms of biological role, catalyzes the synthesis of phosphatidylserine (PtdSer). This chain is CDP-diacylglycerol--serine O-phosphatidyltransferase (CHO1), found in Saccharomyces cerevisiae (strain ATCC 204508 / S288c) (Baker's yeast).